The primary structure comprises 320 residues: MSSAPASGGLRLLVCFLGVFVCYFYYGILQETITRRTYGEGEKQEKFRFALSLVFVQCIVNALFAKLLIQCFDSGKTDRTQSWLYSACSLSYLGAMVSSNSALQFVNYPTQVLGKSCKPIPVMLLGVTLLRKKYPLTKYLCVLLIVFGVALFMYKPKTGSGDGDHTVGYGELLLLLSLTLDGLTGVSQDYMRAHFQTGSNHMMLSINLWSSLFLGAGIVLTGELWDFLSFTERYPSIVYNIVLFSLTSALGQTFIFMTVVYFGPLTCSIITTTRKFFTILASVILFSNPISSIQWVGTLLVFLGLGLDATYGKGSKKPSH.

8 helical membrane-spanning segments follow: residues 9-29 (GLRL…YGIL), 49-69 (FALS…KLLI), 81-103 (QSWL…NSAL), 134-154 (YPLT…LFMY), 166-186 (TVGY…LTGV), 202-222 (MMLS…VLTG), 241-261 (IVLF…TVVY), and 283-303 (VILF…LVFL). Residues 316-320 (KKPSH) carry the Di-lysine motif motif.

It belongs to the nucleotide-sugar transporter family. SLC35B subfamily.

The protein localises to the endoplasmic reticulum membrane. Functionally, probable sugar transporter. In Xenopus laevis (African clawed frog), this protein is Solute carrier family 35 member B1 (slc35b1).